A 58-amino-acid polypeptide reads, in one-letter code: MKIFIFIFIMALILAMIRADSSEEKRHRKRKKHHRGYFQQYQPYQRYPLNYPPAYPFP.

Positions 1 to 19 (MKIFIFIFIMALILAMIRA) are cleaved as a signal peptide.

Belongs to the histatin/statherin family. As to expression, expressed in mammary glands.

It localises to the secreted. This Bos taurus (Bovine) protein is Histatherin.